The chain runs to 245 residues: Terpene cyclase prhH (245 aa).

A run of 7 helical transmembrane segments spans residues isoleucine 17–isoleucine 37, isoleucine 51–proline 71, histidine 76–leucine 96, isoleucine 113–alanine 133, alanine 138–alanine 158, serine 170–isoleucine 190, and proline 205–tyrosine 225.

Belongs to the paxB family.

It is found in the membrane. It participates in secondary metabolite biosynthesis; terpenoid biosynthesis. Terpene cyclase; part of the gene cluster that mediates the biosynthesis of paraherquonin, a meroterpenoid with a unique, highly congested hexacyclic molecular architecture. The first step of the pathway is the synthesis of 3,5-dimethylorsellinic acid (DMOA) by the polyketide synthase prhL. Synthesis of DMOA is followed by farnesylation by the prenyltransferase prhE, methylesterification by the methyl-transferase prhM, epoxidation of the prenyl chain by the flavin-dependent monooxygenase prhF, and cyclization of the farnesyl moiety by the terpene cyclase prhH, to yield the tetracyclic intermediate, protoaustinoid A. The short chain dehydrogenase prhI then oxidizes the C-3 alcohol group of the terpene cyclase product to transform protoaustinoid A into protoaustinoid B. The FAD-binding monooxygenase prhJ catalyzes the oxidation of protoaustinoid B into preaustinoid A which is further oxidized into preaustinoid A1 by FAD-binding monooxygenase phrK. Finally, prhA leads to berkeleydione via the berkeleyone B intermediate. PrhA is a multifunctional dioxygenase that first desaturates at C5-C6 to form berkeleyone B, followed by rearrangement of the A/B-ring to form the cycloheptadiene moiety in berkeleydione. Berkeleydione serves as the key intermediate for the biosynthesis of paraherquonin as well as many other meroterpenoids. The cytochrome P450 monooxygenases prhB, prhD, and prhN, as well as the isomerase prhC, are probably involved in the late stage of paraherquonin biosynthesis, after the production of berkeleydione. Especially prhC might be a multifunctional enzyme that catalyzes the D-ring expansion via intramolecular methoxy rearrangement, as well as the hydrolysis of the expanded D-ring. This is Terpene cyclase prhH from Penicillium brasilianum.